Reading from the N-terminus, the 339-residue chain is Zinc transporter 3 (339 aa).

Residues 1 to 25 form the signal peptide; sequence MKTKNVKLLFFFFSVSLLLIAVVNA. Over 26–54 the chain is Extracellular; the sequence is AEGHSHGGPKCECSHEDDHENKAGARKYK. The chain crosses the membrane as a helical span at residues 55 to 75; sequence IAAIPTVLIAGIIGVLFPLLG. Residues 76–86 lie on the Cytoplasmic side of the membrane; that stretch reads KVFPSLRPETC. Residues 87 to 107 form a helical membrane-spanning segment; it reads FFFVTKAFAAGVILATGFMHV. The Extracellular portion of the chain corresponds to 108-123; the sequence is LPEAYEMLNSPCLTSE. The helical transmembrane segment at 124-144 threads the bilayer; sequence AWEFPFTGFIAMIAAILTLSV. Over 145-184 the chain is Cytoplasmic; it reads DTFATSSFYKSHCKASKRVSDGETGESSVDSEKVQILRTR. A helical membrane pass occupies residues 185-205; sequence VIAQVLELGIIVHSVVIGISL. Over 206-216 the chain is Extracellular; sequence GASQSPDAAKA. The chain crosses the membrane as a helical span at residues 217–237; it reads LFIALMFHQCFEGLGLGGCIA. Topologically, residues 238-247 are cytoplasmic; that stretch reads QGKFKCLSVT. A helical transmembrane segment spans residues 248–268; that stretch reads IMSTFFAITTPIGIVVGMGIA. The Extracellular portion of the chain corresponds to 269-278; that stretch reads NSYDESSPTA. A helical membrane pass occupies residues 279–299; sequence LIVQGVLNAASAGILIYMSLV. Topologically, residues 300–315 are cytoplasmic; sequence DLLAADFTHPKMQSNT. The chain crosses the membrane as a helical span at residues 316–336; it reads GLQIMAHIALLLGAGLMSLLA. At 337 to 339 the chain is on the extracellular side; that stretch reads KWA.

Belongs to the ZIP transporter (TC 2.A.5) family. Expressed predominantly in the roots of zinc-deficient plants.

The protein resides in the cell membrane. Mediates zinc uptake from the rhizosphere. May also transport other divalent cations. The protein is Zinc transporter 3 (ZIP3) of Arabidopsis thaliana (Mouse-ear cress).